The sequence spans 29 residues: Cyclotide mela-2 (29 aa).

The cyclopeptide (Gly-Asp) cross-link spans 1 to 29 (GKPTCGETCFKGKCYTPGCTCSYPLCKKD). 3 cysteine pairs are disulfide-bonded: C5–C19, C9–C21, and C14–C26.

Post-translationally, this is a cyclic peptide. In terms of processing, contains 3 disulfide bonds.

Functionally, probably participates in a plant defense mechanism (Potential). Binds to and induces leakage in phospholipd membranes, particularly ones containing 1-palmitoyl-2-oleophosphatidylethanolamine (POPE). In vitro, displays cytotoxicity against cultured cells but no hemolytic activity towards fresh erythrocytes. Not active against Gram-negative bacterium E.coli ATCC 25922 or Gram-positive bacterium S.aureus ATCC 25923 up to a concentration of 64 uM. This is Cyclotide mela-2 from Melicytus latifolius (Norfolk Island mahoe).